We begin with the raw amino-acid sequence, 126 residues long: Phosphoribosyl-AMP cyclohydrolase (126 aa).

Mg(2+) is bound at residue aspartate 74. A Zn(2+)-binding site is contributed by cysteine 75. Residues aspartate 76 and aspartate 78 each contribute to the Mg(2+) site. Zn(2+) is bound by residues cysteine 92 and cysteine 99.

It belongs to the PRA-CH family. Homodimer. Requires Mg(2+) as cofactor. The cofactor is Zn(2+).

The protein resides in the cytoplasm. It catalyses the reaction 1-(5-phospho-beta-D-ribosyl)-5'-AMP + H2O = 1-(5-phospho-beta-D-ribosyl)-5-[(5-phospho-beta-D-ribosylamino)methylideneamino]imidazole-4-carboxamide. The protein operates within amino-acid biosynthesis; L-histidine biosynthesis; L-histidine from 5-phospho-alpha-D-ribose 1-diphosphate: step 3/9. Functionally, catalyzes the hydrolysis of the adenine ring of phosphoribosyl-AMP. This is Phosphoribosyl-AMP cyclohydrolase from Geotalea daltonii (strain DSM 22248 / JCM 15807 / FRC-32) (Geobacter daltonii).